We begin with the raw amino-acid sequence, 114 residues long: Large ribosomal subunit protein uL24 (114 aa).

The protein belongs to the universal ribosomal protein uL24 family. As to quaternary structure, part of the 50S ribosomal subunit.

In terms of biological role, one of two assembly initiator proteins, it binds directly to the 5'-end of the 23S rRNA, where it nucleates assembly of the 50S subunit. Its function is as follows. One of the proteins that surrounds the polypeptide exit tunnel on the outside of the subunit. This chain is Large ribosomal subunit protein uL24, found in Acidothermus cellulolyticus (strain ATCC 43068 / DSM 8971 / 11B).